The primary structure comprises 251 residues: MEFLKRHEGHMHMSDSATSMVTSATSAVMDMASATMSMTMSSSTSSSSGMAMEGMDHGSSHMAMNMWLTASFKDYPVVFKDLRASTKAQAFGIFVLLFFVAFLARMLEFVRNYLEEIVWKNNNYAEVEQGISQHSANLQSPPVKSCCDDNAKEVVSDESIDKQNSPQHEETTKARGTGKSLSLASTISRDIIRLALCIIPDLFAYSLMLAAMTYTLTYFFAVVIGSGVGRFVAERLMEHYRIKRGPPRNCC.

A helical membrane pass occupies residues 90-110 (AFGIFVLLFFVAFLARMLEFV). Residues 157-173 (DESIDKQNSPQHEETTK) are compositionally biased toward basic and acidic residues. Positions 157 to 176 (DESIDKQNSPQHEETTKARG) are disordered. A helical transmembrane segment spans residues 208–228 (MLAAMTYTLTYFFAVVIGSGV).

In terms of assembly, oligomer.

The protein resides in the cell membrane. In terms of biological role, required for high affinity copper (probably reduced Cu I) transport into the cell. This is Copper transport protein CTR1 (CTR1) from Candida albicans (strain SC5314 / ATCC MYA-2876) (Yeast).